Here is a 373-residue protein sequence, read N- to C-terminus: Transaminase AMT5-2 (373 aa).

Pyridoxal 5'-phosphate is bound at residue arginine 92. Lysine 196 bears the N6-(pyridoxal phosphate)lysine mark. Glutamate 232 lines the pyridoxal 5'-phosphate pocket.

The protein belongs to the class-IV pyridoxal-phosphate-dependent aminotransferase family. Pyridoxal 5'-phosphate serves as cofactor.

It functions in the pathway mycotoxin biosynthesis. Its function is as follows. Transaminase; part of the gene clusters that mediate the biosynthesis of AM-toxins, host-selective toxins (HSTs) causing Alternaria blotch on apple, a worldwide distributed disease. AM-toxins are cyclic depsipeptides containing the 3 residues 2-hydroxy-isovaleric acid (2-HIV), dehydroalanine, L-alanine which are common for all 3 AM-toxins I to III. The fourth precursor is L-alpha-amino-methoxyphenyl-valeric acid (L-Amv) for AM-toxin I, L-alpha-amino-phenyl-valeric acid (L-Apv) for AM-toxin II, and L-alpha-amino-hydroxyphenyl-valeric acid (L-Ahv) for AM-toxin III. AM-toxins have two target sites for affecting susceptible apple cells; they cause invagination of the plasma membrane and electrolyte loss and chloroplast disorganization. The non-ribosomal peptide synthetase AMT1 contains 4 catalytic modules and is responsible for activation of each residue in AM-toxin. The aldo-keto reductase AMT2 catalyzes the conversion of 2-keto-isovaleric acid (2-KIV) to 2-hydroxy-isovaleric acid (2-HIV), one of the precursor residues incorporated by AMT1 during AM-toxin biosynthesis, by reduction of its ketone to an alcohol. The cytochrome P450 monooxygenase AMT3 and the thioesterase AMT4 are also important for AM-toxin production, but their exact function within the AM-toxin biosynthesis are not known yet. Up to 21 proteins (including AMT1 to AMT4) are predicted to be involved in AM-toxin biosynthesis since their expression ishighly up-regulated in AM-toxin-producing cultures. The protein is Transaminase AMT5-2 of Alternaria alternata (Alternaria rot fungus).